The sequence spans 1042 residues: MSWLRSSPLRQSFSKAGGGSGSGASSRGGNSTNGTVRAFDASECDPKACYDSFCIHWQQAFEIIQRSENNRGQSHDDVLGVVTHLDHMVTLLLVELHHCNKVGLPGAPAPPAPCLEHLLSENLLDKLYEWGVKTGRYANAVRLEQLKLYEQLVSHSRHQLLVHEPFLRPLLKILASSQNEIYPPDVEKRLVILLNQLCVVLMQNVHLLDLFFFSTAQQNGSGGHANFIIFSLLIPYVHQEGSLGHQARDALLLCMACPRRLDRGTYIATYSSICPVWFTRAGEGLYSRLPNQIDIKTIDWYRITTDDVTELQELTLFMNSLEFCNAVVQVAHSMIRQQLLDFLYQGFLVPVLGPAVLQTNVESQISAMAYLDLIVRSVTEPGLIQIVVKFLLDEEKFDGQRILDVLVERLNSNDTRLCMVSLSLFDTLLSLNCEDIMLELALKYLLNCQHVPISHRFKVNRVDPYSNAVEYFLNTSPDIMKKVNNVLNINNNNNNTSQASSMLGSGPSSMPQGGRNVSKTIGANWNHYGNNTGETLMANYQAYLLEARNRIVQCKHACDQWNNVYRYQKLSKLVNNSSSLSHSGNGTAGSEDVRTYKVQMIKNFLAEFTTAPDSAVDMAGDGDRSSLCQSPAGMFGTGHHASHLMATTSKQLDSLQSLGDSSGYESLNITNLGTGSEDGRRHEAWKVSSVKEETIVDLDLSEDLFAQGTVSLGPFLTAIWGKLQTFTSNCLYVNLHLTGLISHLAWFPLPLLHSILLRPDIPTTSDTPSFHQVLKILKQQIDAELPDCDESLEIVDVARSFLVDREFRLINMRKNAIESNPHSGKLLLPNGATGASGPVSMTSNLSQTTPMQLTPSSSYDPFKRNDTKRKSISNSFSSIFRRPGSSASSGLAQVFQFFTGGGSSSNSSSISHQSSSTPSPAGSQQYLSSNSSGVSSFMGSSRRESREAETQFVDHPSIGGPPSSMGPTSLTSTGSPHNSLEYSLVNINGSIVGGIGSERQRDLAVSAVVLDEWLKELAAITQEQCIIMISDQVSSQKPGKLS.

Positions 1 to 14 (MSWLRSSPLRQSFS) are enriched in polar residues. Disordered regions lie at residues 1-31 (MSWL…GGNS), 494-514 (NNTS…PQGG), 821-866 (PHSG…KRND), and 905-977 (SNSS…GSPH). Residues 839–859 (VSMTSNLSQTTPMQLTPSSSY) show a composition bias toward polar residues. Low complexity-rich tracts occupy residues 905–940 (SNSS…FMGS) and 956–976 (PSIG…TGSP).

The protein belongs to the FHIP family.

The sequence is that of FHIP family protein AAEL005291 from Aedes aegypti (Yellowfever mosquito).